The primary structure comprises 246 residues: Adenosylcobinamide-GDP ribazoletransferase (246 aa).

Helical transmembrane passes span 37-57 (FPAV…AGAL), 64-84 (ALAA…DGLA), 100-122 (LLAV…LQLL), 139-159 (ALVL…WWLM), 185-205 (LAAA…VLWW), and 223-243 (AGIE…GLWI).

The protein belongs to the CobS family. The cofactor is Mg(2+).

Its subcellular location is the cell inner membrane. The enzyme catalyses alpha-ribazole + adenosylcob(III)inamide-GDP = adenosylcob(III)alamin + GMP + H(+). It carries out the reaction alpha-ribazole 5'-phosphate + adenosylcob(III)inamide-GDP = adenosylcob(III)alamin 5'-phosphate + GMP + H(+). Its pathway is cofactor biosynthesis; adenosylcobalamin biosynthesis; adenosylcobalamin from cob(II)yrinate a,c-diamide: step 7/7. Joins adenosylcobinamide-GDP and alpha-ribazole to generate adenosylcobalamin (Ado-cobalamin). Also synthesizes adenosylcobalamin 5'-phosphate from adenosylcobinamide-GDP and alpha-ribazole 5'-phosphate. In Novosphingobium aromaticivorans (strain ATCC 700278 / DSM 12444 / CCUG 56034 / CIP 105152 / NBRC 16084 / F199), this protein is Adenosylcobinamide-GDP ribazoletransferase.